The primary structure comprises 129 residues: Histone H2A.2 (129 aa).

Position 5 is an N6-acetyllysine (K5). Position 108 is an N5-methylglutamine (Q108).

It belongs to the histone H2A family. In terms of assembly, the nucleosome is a histone octamer containing two molecules each of H2A, H2B, H3 and H4 assembled in one H3-H4 heterotetramer and two H2A-H2B heterodimers. The octamer wraps approximately 147 bp of DNA. Post-translationally, acetylated by ESA1 to form H2AK4ac.

It localises to the nucleus. The protein localises to the chromosome. In terms of biological role, core component of nucleosome which plays a central role in DNA double strand break (DSB) repair. Nucleosomes wrap and compact DNA into chromatin, limiting DNA accessibility to the cellular machineries which require DNA as a template. Histones thereby play a central role in transcription regulation, DNA repair, DNA replication and chromosomal stability. DNA accessibility is regulated via a complex set of post-translational modifications of histones, also called histone code, and nucleosome remodeling. This is Histone H2A.2 (HTA2) from Lodderomyces elongisporus (strain ATCC 11503 / CBS 2605 / JCM 1781 / NBRC 1676 / NRRL YB-4239) (Yeast).